The chain runs to 213 residues: Membrane-spanning 4-domains subfamily A member 3 (213 aa).

Residues 1–26 (MKPEETGGSVYQPLDESRHVQRGVLQ) are Cytoplasmic-facing. A helical membrane pass occupies residues 27–47 (ALGAIQILNGILILALGIFLV). Residues 48-58 (CLQHVSHHFRH) are Extracellular-facing. Residues 59-79 (FFFFTFYTGYPLWGAVFFISS) traverse the membrane as a helical segment. Over 80-97 (GSLTVAAGRNPTRMLMQN) the chain is Cytoplasmic. The helical transmembrane segment at 98-118 (SFGINIASTTIAFVGTVFLSV) threads the bilayer. Topologically, residues 119-148 (HLAFNTQAFKGCQSSPSPDVCISLGSSSDG) are extracellular. Residues 149–169 (LVSLMLILTLLELSVTISISA) traverse the membrane as a helical segment. At 170-213 (MWCLGNVCGLREAITSPPNSVESGILPEGSDSENLNTQPQASEE) the chain is on the cytoplasmic side. The disordered stretch occupies residues 189-213 (SVESGILPEGSDSENLNTQPQASEE). Residues 201-213 (SENLNTQPQASEE) show a composition bias toward polar residues.

Belongs to the MS4A family. As to quaternary structure, interacts with CDKN3. Interacts with CDKN3-CDK2 complexes through its binding to CDKN3; this interaction facilitates dissociation of cyclin A from CDKN3-CDK2 complexes. Expressed at low levels only in specific immune tissues, such as, spleen, bone marrow and peripheral blood leukocytes.

It is found in the membrane. Its function is as follows. Hematopoietic modulator for the G1-S cell cycle transition. Modulates the level of phosphorylation of cyclin-dependent kinase 2 (CDK2) through its direct binding to cyclin-dependent kinase inhibitor 3 (CDKN3/KAP). The sequence is that of Membrane-spanning 4-domains subfamily A member 3 (Ms4a3) from Mus musculus (Mouse).